The chain runs to 130 residues: Sigma-w pathway protein YsdB (130 aa).

Residues 2–22 form a helical membrane-spanning segment; the sequence is FVMVLRIILLALFAYCIYAVV.

The protein resides in the membrane. Functionally, may mediate a negative feedback loop that down-regulates the expression of the sigma-W regulon following the activation of sigma-W in response to conditions of cell envelope stress. Might interact with and inhibit the activity of the protease PrsW, or could bind to the anti-sigma-W factor RsiW and thereby protect it from PrsW-mediated cleavage. The sequence is that of Sigma-w pathway protein YsdB (ysdB) from Bacillus subtilis (strain 168).